Here is a 251-residue protein sequence, read N- to C-terminus: 3-deoxy-manno-octulosonate cytidylyltransferase (251 aa).

The protein belongs to the KdsB family.

The protein localises to the cytoplasm. It catalyses the reaction 3-deoxy-alpha-D-manno-oct-2-ulosonate + CTP = CMP-3-deoxy-beta-D-manno-octulosonate + diphosphate. Its pathway is nucleotide-sugar biosynthesis; CMP-3-deoxy-D-manno-octulosonate biosynthesis; CMP-3-deoxy-D-manno-octulosonate from 3-deoxy-D-manno-octulosonate and CTP: step 1/1. The protein operates within bacterial outer membrane biogenesis; lipopolysaccharide biosynthesis. Its function is as follows. Activates KDO (a required 8-carbon sugar) for incorporation into bacterial lipopolysaccharide in Gram-negative bacteria. This chain is 3-deoxy-manno-octulosonate cytidylyltransferase, found in Alcanivorax borkumensis (strain ATCC 700651 / DSM 11573 / NCIMB 13689 / SK2).